The following is a 469-amino-acid chain: 3-isopropylmalate dehydratase large subunit (469 aa).

Cys-347, Cys-408, and Cys-411 together coordinate [4Fe-4S] cluster.

The protein belongs to the aconitase/IPM isomerase family. LeuC type 1 subfamily. Heterodimer of LeuC and LeuD. The cofactor is [4Fe-4S] cluster.

It catalyses the reaction (2R,3S)-3-isopropylmalate = (2S)-2-isopropylmalate. The protein operates within amino-acid biosynthesis; L-leucine biosynthesis; L-leucine from 3-methyl-2-oxobutanoate: step 2/4. Its function is as follows. Catalyzes the isomerization between 2-isopropylmalate and 3-isopropylmalate, via the formation of 2-isopropylmaleate. The sequence is that of 3-isopropylmalate dehydratase large subunit from Haemophilus influenzae (strain ATCC 51907 / DSM 11121 / KW20 / Rd).